The sequence spans 243 residues: IVGGKTAKFGDYPWMVSIQQKNKKGTFDHICGGAIINVNWILTAAHCFDQPIVKSDYRAYVGLRSILHTKENTVQRLELSKIVLHPGYKPKKDPDDIALIKVAKPIVIGNYANGICVPKGVTNPEGNATVIGWGKISSGGKQVNTLQEVTIPIIPWKKCKEIYGDEFSEFEYSQITPYMICAGAEGKDSCQADSGGPLFQIDANGVATLIGTVANGADCGYKHYPGVYMKVSSYTNWMSKNMV.

In terms of domain architecture, Peptidase S1 spans 1 to 243 (IVGGKTAKFG…YTNWMSKNMV (243 aa)). The cysteines at positions 31 and 47 are disulfide-linked. Residues H46 and D96 each act as charge relay system in the active site. N127 carries an N-linked (GlcNAc...) asparagine glycan. Intrachain disulfides connect C159–C181 and C190–C219. S194 acts as the Charge relay system in catalysis.

The protein belongs to the peptidase S1 family. Heterodimer with venom peptide isomerase light chain; disulfide-linked. In terms of processing, N-linked glycan at Asn-127 consists of Man3-GlcNAc2-Fuc. As to expression, expressed by the venom gland.

The protein resides in the secreted. Functionally, peptide isomerase that inverts the chirality at the Ser-81 of omega-Aga IVB. Acts cofactor-independently. This is Venom peptide isomerase heavy chain from Agelenopsis aperta (North American funnel-web spider).